Reading from the N-terminus, the 384-residue chain is S-adenosylmethionine synthase (384 aa).

His-15 serves as a coordination point for ATP. Residue Asp-17 participates in Mg(2+) binding. Position 43 (Glu-43) interacts with K(+). L-methionine contacts are provided by Glu-56 and Gln-99. The flexible loop stretch occupies residues 99 to 109 (QSPDINQGVDR). Residues 164–166 (DAK), 230–231 (RF), Asp-239, 245–246 (RK), Ala-262, and Lys-266 each bind ATP. L-methionine is bound at residue Asp-239. Lys-270 is a binding site for L-methionine.

It belongs to the AdoMet synthase family. In terms of assembly, homotetramer; dimer of dimers. Requires Mg(2+) as cofactor. The cofactor is K(+).

It localises to the cytoplasm. It carries out the reaction L-methionine + ATP + H2O = S-adenosyl-L-methionine + phosphate + diphosphate. The protein operates within amino-acid biosynthesis; S-adenosyl-L-methionine biosynthesis; S-adenosyl-L-methionine from L-methionine: step 1/1. Its function is as follows. Catalyzes the formation of S-adenosylmethionine (AdoMet) from methionine and ATP. The overall synthetic reaction is composed of two sequential steps, AdoMet formation and the subsequent tripolyphosphate hydrolysis which occurs prior to release of AdoMet from the enzyme. This Escherichia fergusonii (strain ATCC 35469 / DSM 13698 / CCUG 18766 / IAM 14443 / JCM 21226 / LMG 7866 / NBRC 102419 / NCTC 12128 / CDC 0568-73) protein is S-adenosylmethionine synthase.